The sequence spans 74 residues: Defensin-like protein 39 (74 aa).

The signal sequence occupies residues 1–28; that stretch reads MEKKSLAALSFLLLLVLFVAQEIVVTEA. Intrachain disulfides connect C31-C74, C42-C63, C48-C68, and C52-C70.

This sequence belongs to the DEFL family. As to expression, pods.

The protein localises to the secreted. Functionally, possesses antifungal activity. In Pisum sativum (Garden pea), this protein is Defensin-like protein 39 (PI39).